The following is a 272-amino-acid chain: MALAKRIIPCLDVKDGRVVKGVRFRGLRDAGDPAELAHHYYRHGADEIVFLDISASPEGRRLMVDVVRRTAEKVFIPMTVGGGISDVEDFRRALTAGADKVSVNTAAVENPELISEAADIFGSQCVVVAIDAKREPLKPEHEHVADHIFSNDDGEYWFRVYVRGGREPVDLDAITWAKRVEELGAGEILLTSIDADGTQEGYDIELTREVCNAVSIPVIASGGCGHPKHMVEVFKEADADAALAASIFHYGKFTIEEVKEHLAERGVRVRQC.

Residues aspartate 12 and aspartate 131 contribute to the active site.

The protein belongs to the HisA/HisF family. Heterodimer of HisH and HisF.

The protein resides in the cytoplasm. The catalysed reaction is 5-[(5-phospho-1-deoxy-D-ribulos-1-ylimino)methylamino]-1-(5-phospho-beta-D-ribosyl)imidazole-4-carboxamide + L-glutamine = D-erythro-1-(imidazol-4-yl)glycerol 3-phosphate + 5-amino-1-(5-phospho-beta-D-ribosyl)imidazole-4-carboxamide + L-glutamate + H(+). Its pathway is amino-acid biosynthesis; L-histidine biosynthesis; L-histidine from 5-phospho-alpha-D-ribose 1-diphosphate: step 5/9. Functionally, IGPS catalyzes the conversion of PRFAR and glutamine to IGP, AICAR and glutamate. The HisF subunit catalyzes the cyclization activity that produces IGP and AICAR from PRFAR using the ammonia provided by the HisH subunit. This chain is Imidazole glycerol phosphate synthase subunit HisF, found in Methanopyrus kandleri (strain AV19 / DSM 6324 / JCM 9639 / NBRC 100938).